The chain runs to 270 residues: uncharacterized protein (270 aa).

The N-terminal stretch at 1–22 (MGYIKRMALYMSVFLLIIFIVG) is a signal peptide. C23 carries the N-palmitoyl cysteine lipid modification. The S-diacylglycerol cysteine moiety is linked to residue C23.

This sequence belongs to the staphylococcal tandem lipoprotein family.

It is found in the cell membrane. This is an uncharacterized protein from Staphylococcus aureus (strain COL).